The sequence spans 477 residues: Methylenetetrahydrofolate--tRNA-(uracil-5-)-methyltransferase TrmFO (477 aa).

14–19 (GGGLAG) provides a ligand contact to FAD.

It belongs to the MnmG family. TrmFO subfamily. Requires FAD as cofactor.

It is found in the cytoplasm. The catalysed reaction is uridine(54) in tRNA + (6R)-5,10-methylene-5,6,7,8-tetrahydrofolate + NADH + H(+) = 5-methyluridine(54) in tRNA + (6S)-5,6,7,8-tetrahydrofolate + NAD(+). It carries out the reaction uridine(54) in tRNA + (6R)-5,10-methylene-5,6,7,8-tetrahydrofolate + NADPH + H(+) = 5-methyluridine(54) in tRNA + (6S)-5,6,7,8-tetrahydrofolate + NADP(+). Catalyzes the folate-dependent formation of 5-methyl-uridine at position 54 (M-5-U54) in all tRNAs. This is Methylenetetrahydrofolate--tRNA-(uracil-5-)-methyltransferase TrmFO from Rhizobium etli (strain ATCC 51251 / DSM 11541 / JCM 21823 / NBRC 15573 / CFN 42).